The following is a 569-amino-acid chain: DNA-binding protein eta2 (569 aa).

Disordered stretches follow at residues 1–26 (MMLAIDMTINENQGTRSNLESPTLSC) and 133–159 (KRKIARSSSDDSESKVESTNSFNAKKR). Positions 9 to 26 (INENQGTRSNLESPTLSC) are enriched in polar residues. A Phosphoserine modification is found at serine 21. 2 Myb-like domains span residues 322–371 (LDPK…RFVV) and 377–459 (ETID…EKTI). Residues 459–487 (IASYSSNQRQEEDQGKKRKKRKKKKSKGK) are disordered. Over residues 474-487 (KKRKKRKKKKSKGK) the composition is skewed to basic residues.

It is found in the nucleus. In Schizosaccharomyces pombe (strain 972 / ATCC 24843) (Fission yeast), this protein is DNA-binding protein eta2 (eta2).